The primary structure comprises 760 residues: Probable myosin-binding protein 4 (760 aa).

Residues 26–46 traverse the membrane as a helical segment; sequence WFLILLMFIDALLSYLLVWFA. Disordered regions lie at residues 161–189, 247–273, 292–311, and 348–595; these read SRGR…SLKK, SEKR…QPVL, SMLG…VKAK, and EAEV…KHSA. Over residues 352–366 the composition is skewed to low complexity; it reads SGSSSPSGGEFLSPS. Residues 371–383 show a composition bias toward basic and acidic residues; the sequence is ASREIRIQEHDDS. Residues 385-394 show a composition bias toward polar residues; the sequence is DFSQNITSSA. The stretch at 388 to 416 forms a coiled coil; that stretch reads QNITSSAMEIEEFEAAIEQKESDHMDVSG. Over residues 404–413 the composition is skewed to basic and acidic residues; it reads IEQKESDHMD. Composition is skewed to acidic residues over residues 446–458 and 517–526; these read LEQE…ESEV and EEDVDNEESE. 2 stretches are compositionally biased toward basic and acidic residues: residues 537–550 and 562–580; these read VKEE…HGDH and SKEE…KITE. Residues 611–709 enclose the GTD-binding domain; the sequence is SLVEVLKQQL…DLEMELEYYR (99 aa). A disordered region spans residues 725-760; sequence GILGNTEETNVTSPTDETSIKDSTDTKLTGSPSAEN. Composition is skewed to polar residues over residues 730-741 and 750-760; these read TEETNVTSPTDE and TKLTGSPSAEN.

The protein localises to the endomembrane system. Its function is as follows. Membrane-anchored myosin receptors that define a distinct, plant-specific transport vesicle compartment. The polypeptide is Probable myosin-binding protein 4 (Arabidopsis thaliana (Mouse-ear cress)).